Here is a 450-residue protein sequence, read N- to C-terminus: tRNA modification GTPase MnmE (450 aa).

3 residues coordinate (6S)-5-formyl-5,6,7,8-tetrahydrofolate: Arg20, Glu78, and Lys117. The TrmE-type G domain occupies 211–372; it reads GLRMVIVGKP…LEESIYRETQ (162 aa). Asn221 lines the K(+) pocket. Residues 221-226, 240-246, and 265-268 each bind GTP; these read NVGKST, TDIPGTT, and DTAG. Ser225 contacts Mg(2+). K(+) contacts are provided by Thr240, Ile242, and Thr245. A Mg(2+)-binding site is contributed by Thr246. Lys450 provides a ligand contact to (6S)-5-formyl-5,6,7,8-tetrahydrofolate.

The protein belongs to the TRAFAC class TrmE-Era-EngA-EngB-Septin-like GTPase superfamily. TrmE GTPase family. In terms of assembly, homodimer. Heterotetramer of two MnmE and two MnmG subunits. It depends on K(+) as a cofactor.

The protein resides in the cytoplasm. In terms of biological role, exhibits a very high intrinsic GTPase hydrolysis rate. Involved in the addition of a carboxymethylaminomethyl (cmnm) group at the wobble position (U34) of certain tRNAs, forming tRNA-cmnm(5)s(2)U34. The chain is tRNA modification GTPase MnmE from Thermotoga sp. (strain RQ2).